Here is a 58-residue protein sequence, read N- to C-terminus: UPF0391 membrane protein Patl_4137 (58 aa).

Transmembrane regions (helical) follow at residues 4–24 (WALTFLIIAILAGVMGFGGIA) and 27–47 (AAGIAKIIFFVFLVLLVLSLV).

The protein belongs to the UPF0391 family.

Its subcellular location is the cell membrane. In Pseudoalteromonas atlantica (strain T6c / ATCC BAA-1087), this protein is UPF0391 membrane protein Patl_4137.